Consider the following 295-residue polypeptide: Tyrosine recombinase XerD (295 aa).

Residues 1-85 (MNTIIEEYLN…TIRSFHQFAL (85 aa)) enclose the Core-binding (CB) domain. The 184-residue stretch at 106 to 289 (KLPDVLEIDE…SKSQIRKMYT (184 aa)) folds into the Tyr recombinase domain. Active-site residues include Arg146, Lys170, His241, Arg244, and His267. Tyr276 (O-(3'-phospho-DNA)-tyrosine intermediate) is an active-site residue.

It belongs to the 'phage' integrase family. XerD subfamily. In terms of assembly, forms a cyclic heterotetrameric complex composed of two molecules of XerC and two molecules of XerD.

It localises to the cytoplasm. Site-specific tyrosine recombinase, which acts by catalyzing the cutting and rejoining of the recombining DNA molecules. The XerC-XerD complex is essential to convert dimers of the bacterial chromosome into monomers to permit their segregation at cell division. It also contributes to the segregational stability of plasmids. The sequence is that of Tyrosine recombinase XerD from Staphylococcus epidermidis (strain ATCC 35984 / DSM 28319 / BCRC 17069 / CCUG 31568 / BM 3577 / RP62A).